The following is a 498-amino-acid chain: ATP synthase subunit beta, chloroplastic (498 aa).

172–179 contributes to the ATP binding site; that stretch reads GGAGVGKT.

The protein belongs to the ATPase alpha/beta chains family. As to quaternary structure, F-type ATPases have 2 components, CF(1) - the catalytic core - and CF(0) - the membrane proton channel. CF(1) has five subunits: alpha(3), beta(3), gamma(1), delta(1), epsilon(1). CF(0) has four main subunits: a(1), b(1), b'(1) and c(9-12).

The protein resides in the plastid. It is found in the chloroplast thylakoid membrane. It catalyses the reaction ATP + H2O + 4 H(+)(in) = ADP + phosphate + 5 H(+)(out). Functionally, produces ATP from ADP in the presence of a proton gradient across the membrane. The catalytic sites are hosted primarily by the beta subunits. This chain is ATP synthase subunit beta, chloroplastic, found in Cinnamomum camphora (Camphor tree).